We begin with the raw amino-acid sequence, 76 residues long: Vasotab-TY2 (76 aa).

A signal peptide spans 1-21 (MKFALFSVLVLMLIATFVAAD). The region spanning 22-76 (DCPRICTADYTPVCGTPSGGRRSANRTFANQCGLDSHNCLNKGATYDKLHDGECK) is the Kazal-like domain. Disulfide bonds link Cys23/Cys60, Cys27/Cys53, and Cys35/Cys75.

In terms of tissue distribution, expressed by the salivary gland.

It is found in the secreted. Functionally, vasodilator protein that inhibits vasoconstriction of isolated rat femoral artery induced by phenylephrine. Since platelet aggregation and vasoconstriction are key hemostatic responses, particularly in small wounds, this protein likely participates in the antihemostatic responses during blood feeding. Blocks L-type calcium channels (Cav1/CACNA1) in left ventricular myocytes isolated from rat hearts. This chain is Vasotab-TY2, found in Tabanus yao (Horsefly).